We begin with the raw amino-acid sequence, 147 residues long: Deoxyuridine 5'-triphosphate nucleotidohydrolase (147 aa).

Substrate-binding positions include 67–69 (RSG), Asn80, and 84–86 (TID).

It belongs to the dUTPase family. Mg(2+) is required as a cofactor.

The catalysed reaction is dUTP + H2O = dUMP + diphosphate + H(+). The protein operates within pyrimidine metabolism; dUMP biosynthesis; dUMP from dCTP (dUTP route): step 2/2. Its function is as follows. This enzyme is involved in nucleotide metabolism: it produces dUMP, the immediate precursor of thymidine nucleotides and it decreases the intracellular concentration of dUTP so that uracil cannot be incorporated into DNA. This is Deoxyuridine 5'-triphosphate nucleotidohydrolase from Anaplasma marginale (strain St. Maries).